A 1055-amino-acid chain; its full sequence is TNF receptor-associated factor homolog 1a (1055 aa).

Residues 1–56 (MSESTNEDSGAGRSSLEENSNGQRSQSEEAIAEWRSSEQVENGTPSTSPPYWDIDD) are disordered. Residues 37–46 (SEQVENGTPS) show a composition bias toward polar residues. The 124-residue stretch at 68-191 (FGKNTWTIEK…SGCLTIKAQV (124 aa)) folds into the MATH domain. 4 disordered regions span residues 352–380 (PKKE…VERD), 431–590 (AESE…NGSY), 603–772 (FSNG…APII), and 820–845 (VGSS…SHPS). Positions 433 to 446 (SEQKGKRGASEKEK) are enriched in basic and acidic residues. Residues 441-496 (ASEKEKKSKKKQAKQKKNKNKGKEMRKEDKVRTQTEEREIEKEECVRAIAESSAEK) are a coiled coil. Positions 447–460 (KSKKKQAKQKKNKN) are enriched in basic residues. A compositionally biased stretch (basic and acidic residues) spans 461–486 (KGKEMRKEDKVRTQTEEREIEKEECV). Residues 502–513 (DVSDVSDSVDSS) show a composition bias toward low complexity. The span at 524–537 (RESSPVHWEMDASE) shows a compositional bias: basic and acidic residues. Residues 569-586 (MDDSSSTCSNDSIQSGVA) show a composition bias toward polar residues. The segment covering 657–668 (QKPESPKERSPV) has biased composition (basic and acidic residues). 2 stretches are compositionally biased toward polar residues: residues 723 to 740 (KSPS…QLQT) and 823 to 845 (SGFT…SHPS).

In terms of assembly, interacts with AHK3. Interacts with ATG6, SINAT1, SINAT2, SINAT5 and SINAT6.

It is found in the cytoplasm. Functions redundantly with TRAF1B in the regulation of plant immune response. Contributes to the turnover of the nucleotide-binding domain and leucine-rich repeat-containing (NB-LRR) immune receptors SNC1 and RPS2. May associate with an E3 ubiquitin-protein ligase complex, which modulates ubiquitination and subsequent degradation of NB-LRR immune sensors to maintain their homeostasis. Functions redundantly with TRAF1B in the regulation of autophagosome formation. Required for SINAT1- and SINAT2-mediated ubiquitination and destabilization of ATG6. Functions as a molecular adapter that helps to regulate autophagy by modulating ATG6 stability. This Arabidopsis thaliana (Mouse-ear cress) protein is TNF receptor-associated factor homolog 1a.